The primary structure comprises 313 residues: Protein FixB (313 aa).

255–283 (LYLAVGISGQIQHMVGANASQTIFAINKD) contacts FAD.

This sequence belongs to the ETF alpha-subunit/FixB family. Heterodimer of FixA and FixB.

It functions in the pathway amine and polyamine metabolism; carnitine metabolism. Its function is as follows. Required for anaerobic carnitine reduction. May bring reductant to CaiA. This Shigella flexneri protein is Protein FixB.